The primary structure comprises 433 residues: 3-phosphoshikimate 1-carboxyvinyltransferase (433 aa).

3-phosphoshikimate contacts are provided by Lys21, Ser22, and Arg26. Residue Lys21 coordinates phosphoenolpyruvate. Phosphoenolpyruvate contacts are provided by Gly92 and Arg120. Residues Ser166, Gln168, Asp317, and Lys344 each coordinate 3-phosphoshikimate. Gln168 lines the phosphoenolpyruvate pocket. The Proton acceptor role is filled by Asp317. Phosphoenolpyruvate is bound by residues Arg348 and Arg391.

The protein belongs to the EPSP synthase family. Monomer.

The protein localises to the cytoplasm. The enzyme catalyses 3-phosphoshikimate + phosphoenolpyruvate = 5-O-(1-carboxyvinyl)-3-phosphoshikimate + phosphate. Its pathway is metabolic intermediate biosynthesis; chorismate biosynthesis; chorismate from D-erythrose 4-phosphate and phosphoenolpyruvate: step 6/7. Functionally, catalyzes the transfer of the enolpyruvyl moiety of phosphoenolpyruvate (PEP) to the 5-hydroxyl of shikimate-3-phosphate (S3P) to produce enolpyruvyl shikimate-3-phosphate and inorganic phosphate. This Caldicellulosiruptor saccharolyticus (strain ATCC 43494 / DSM 8903 / Tp8T 6331) protein is 3-phosphoshikimate 1-carboxyvinyltransferase.